Here is a 236-residue protein sequence, read N- to C-terminus: Biosynthetic peptidoglycan transglycosylase (236 aa).

A helical membrane pass occupies residues 12–31 (ALLWFAASSIVLVLVFRWVP).

This sequence belongs to the glycosyltransferase 51 family.

The protein resides in the cell inner membrane. The enzyme catalyses [GlcNAc-(1-&gt;4)-Mur2Ac(oyl-L-Ala-gamma-D-Glu-L-Lys-D-Ala-D-Ala)](n)-di-trans,octa-cis-undecaprenyl diphosphate + beta-D-GlcNAc-(1-&gt;4)-Mur2Ac(oyl-L-Ala-gamma-D-Glu-L-Lys-D-Ala-D-Ala)-di-trans,octa-cis-undecaprenyl diphosphate = [GlcNAc-(1-&gt;4)-Mur2Ac(oyl-L-Ala-gamma-D-Glu-L-Lys-D-Ala-D-Ala)](n+1)-di-trans,octa-cis-undecaprenyl diphosphate + di-trans,octa-cis-undecaprenyl diphosphate + H(+). It participates in cell wall biogenesis; peptidoglycan biosynthesis. Peptidoglycan polymerase that catalyzes glycan chain elongation from lipid-linked precursors. The protein is Biosynthetic peptidoglycan transglycosylase of Pseudomonas putida (strain GB-1).